Reading from the N-terminus, the 1732-residue chain is MPGPWGTVYFLGTAQICSFLSSRWNLEGVMNQTDASRPLNWTIRKLCHAAFLPSVRLLKAQKSWIERAFYKRECVHIIPSTKDPHRCCCGRLIGQHVGLTPSISVLQNEKNESRLSRNDIQSEKWSISKHTQLSPTDAFGTIEFQGGGHSNKAMYVRVSFDTKPDLLLHLMTKEWQLELPKLLISVHGGLQNFELQPKLKQVFGKGLIKAAMTTGAWIFTGGVNTGVIRHVGDALKDHASKSRGKICTIGIAPWGIVENQEDLIGRDVVRPYQTMSNPMSKLTVLNSMHSHFILADNGTTGKYGAEVKLRRQLEKHISLQKINTRCLPFFSLDSRLFYSFWGSCQLDPIGIGQGVPVVALIVEGGPNVISIVLEYLRDTPPVPVVVCDGSGRASDILAFGHKYSEEGGLINESLRDQLLVTIQKTFTYTRTQAQHLFIILMECMKKKELITVFRMGSEGHQDIDLAILTALLKGANASAPDQLSLALAWNRVDIARSQIFIYGQQWPVGSLEQAMLDALVLDRVDFVKLLIENGVSMHRFLTISRLEELYNTRHGPSNTLYHLVRDVKKGNLPPDYRISLIDIGLVIEYLMGGAYRCNYTRKRFRTLYHNLFGPKRPKALKLLGMEDDIPLRRGRKTTKKREEEVDIDLDDPEINHFPFPFHELMVWAVLMKRQKMALFFWQHGEEAMAKALVACKLCKAMAHEASENDMVDDISQELNHNSRDFGQLAVELLDQSYKQDEQLAMKLLTYELKNWSNATCLQLAVAAKHRDFIAHTCSQMLLTDMWMGRLRMRKNSGLKVILGILLPPSILSLEFKNKDDMPYMTQAQEIHLQEKEPEEPEKPTKEKDEEDMELTAMLGRSNGESSRKKDEEEVQSRHRLIPVGRKIYEFYNAPIVKFWFYTLAYIGYLMLFNYIVLVKMERWPSTQEWIVISYIFTLGIEKMREILMSEPGKLLQKVKVWLQEYWNVTDLIAILLFSVGMILRLQDQPFRSDGRVIYCVNIIYWYIRLLDIFGVNKYLGPYVMMIGKMMIDMMYFVIIMLVVLMSFGVARQAILFPNEEPSWKLAKNIFYMPYWMIYGEVFADQIDPPCGQNETREDGKTIQLPPCKTGAWIVPAIMACYLLVANILLVNLLIAVFNNTFFEVKSISNQVWKFQRYQLIMTFHERPVLPPPLIIFSHMTMIFQHVCCRWRKHESDQDERDYGLKLFITDDELKKVHDFEEQCIEEYFREKDDRFNSSNDERIRVTSERVENMSMRLEEVNEREHSMKASLQTVDIRLAQLEDLIGRMATALERLTGLERAESNKIRSRTSSDCTDAAYIVRQSSFNSQEGNTFKLQESIDPAGEETISPTSPTLMPRMRSHSFYSVNVKDKGGIEKLESIFKERSLSLHRATSSHSVAKEPKAPAAPANTLAIVPDSRRPSSCIDIYVSAMDELHCDIEPLDNSMNILGLGEPSFSALAPSTTPSSSAYATLAPTDRPPSRSIDFEDLTSMDTRSFSSDYTHLPECQNPWDTDPPTYHTIERSKSSRYLATTPFLLEEAPIVKSHSFMFSPSRSYYANFGVPVKTAEYTSITDCIDTRCVNAPQAIADRATFPGGLGDKVEDLSCCHPEREAELSHPSSDSEENEARGQRAANPISSQEAENADRTLSNNITVPKIERANSYSAEEPNVPYAHTRKSFSISDKLDRQRNTASLRNPFQRSKSSKPEGRGDSLSMRRLSRTSAFHSFESKHN.

Residues 1-894 are Cytoplasmic-facing; it reads MPGPWGTVYF…RKIYEFYNAP (894 aa). Calmodulin-binding regions lie at residues 41 to 64, 192 to 215, 300 to 323, 601 to 624, and 793 to 816; these read WTIR…QKSW, NFEL…MTTG, TGKY…QKIN, RKRF…KLLG, and RKNS…LEFK. The required for the inhibitory action of G-beta/gamma-subunits of heterotrimeric G-proteins stretch occupies residues 617–625; the sequence is PKALKLLGM. Ser796 is a 1,2-dioctanoyl-sn-glycero-3-phospho-(1D-myo-inositol-4,5-bisphosphate) binding site. Residues 829-851 form a disordered region; that stretch reads EIHLQEKEPEEPEKPTKEKDEED. Positions 831–847 are enriched in basic and acidic residues; the sequence is HLQEKEPEEPEKPTKEK. The helical transmembrane segment at 895–918 threads the bilayer; that stretch reads IVKFWFYTLAYIGYLMLFNYIVLV. Residues 919 to 925 are Extracellular-facing; that stretch reads KMERWPS. The chain crosses the membrane as a helical span at residues 926–948; sequence TQEWIVISYIFTLGIEKMREILM. The Cytoplasmic segment spans residues 949–964; it reads SEPGKLLQKVKVWLQE. A helical membrane pass occupies residues 965–985; sequence YWNVTDLIAILLFSVGMILRL. The Extracellular portion of the chain corresponds to 986–989; that stretch reads QDQP. Residues 990–1013 traverse the membrane as a helical segment; it reads FRSDGRVIYCVNIIYWYIRLLDIF. At 1014–1028 the chain is on the cytoplasmic side; that stretch reads GVNKYLGPYVMMIGK. Positions 1017 and 1018 each coordinate 1,2-dioctanoyl-sn-glycero-3-phospho-(1D-myo-inositol-4,5-bisphosphate). Residues 1029–1056 traverse the membrane as a helical segment; it reads MMIDMMYFVIIMLVVLMSFGVARQAILF. Residues 1057 to 1073 lie on the Extracellular side of the membrane; the sequence is PNEEPSWKLAKNIFYMP. Residues 1074-1101 constitute an intramembrane region (pore-forming); it reads YWMIYGEVFADQIDPPCGQNETREDGKT. Residues 1102–1111 are Extracellular-facing; that stretch reads IQLPPCKTGA. A helical membrane pass occupies residues 1112–1137; the sequence is WIVPAIMACYLLVANILLVNLLIAVF. Residues 1138 to 1732 are Cytoplasmic-facing; that stretch reads NNTFFEVKSI…AFHSFESKHN (595 aa). Residues 1610 to 1732 are disordered; sequence EREAELSHPS…AFHSFESKHN (123 aa). Composition is skewed to polar residues over residues 1635–1653 and 1690–1701; these read PISS…NNIT and NTASLRNPFQRS.

The protein belongs to the transient receptor (TC 1.A.4) family. LTrpC subfamily. TRPM3 sub-subfamily. In terms of assembly, homotetramer. Interacts with TRPM1; the interaction results in the formation of a heteromultimeric cation channel complex that are functionally different from the homomeric channels.

It localises to the cell membrane. The catalysed reaction is Ca(2+)(in) = Ca(2+)(out). It catalyses the reaction Mn(2+)(in) = Mn(2+)(out). The enzyme catalyses Zn(2+)(in) = Zn(2+)(out). It carries out the reaction Mg(2+)(in) = Mg(2+)(out). The catalysed reaction is Na(+)(in) = Na(+)(out). Activated by the neurosteroid pregnelonone sulfate (PregS). PregS activates the channel by shifting its current-voltage activation curve toward more negative membrane potentials and also potentiates temperature-induced activation. Activated by heat. Intracellular Ca(2+) inhibits TRPM3 probably via interaction with Ca(2+)/calmodulin. Intracellular Mg(2+) inhibits TRPM3 activity. Both intracellular and extracellular protons block TRPM3 through propable binding sites in the pore region. Positively regulated by phosphoinositide phosphoinositol 4,5-biphosphate (PI(4,5)P2). Strongly inhibited by activation of G(i)-coupled receptors via direct binding with G-beta/gamma-subunits of heterotrimeric G-proteins. With respect to regulation, insensitive to pregnenolone sulfate (PregS) or heat. Its activity is regulated as follows. Not inhibited by G-beta/gamma-subunits of heterotrimeric G-proteins. Constitutively active, non-selective divalent cation-conducting channel that is permeable to Ca(2+), Mn(2+), and Mg(2+), with a high permeability for Ca(2+). However, can be enhanced by increasing temperature and by ligands, including the endogenous neurosteroid pregnenolone sulfate and sphingosine-1 and suppressed by intracellular Mg(2+). Implicated in a variety of cellular processes, including insulin/peptide secretion, vascular constriction and dilation, noxious heat sensing, inflammatory and spontaneous pain sensitivity. In neurons of the dorsal root ganglia, functions as thermosensitive channel for the detection of noxious heat and spontaneous pain. Suggested to function as an ionotropic steroid receptor in beta-cell, indeed pregnenolone sulfate leads to Ca(2+) influx and enhanced insulin secretion. Mediates Zn(2+) uptake into the lumen of pancreatic beta cell secretory granules, thereby regulating insulin secretion. Forms heteromultimeric ion channels with TRPM1 which are permeable for Ca(2+) and Zn(2+) ions. Exists as multiple splice variants which differ significantly in their biophysical properties. In terms of biological role, displays strongly reduced permeability for divalent cations and high selectivity toward monovalent cations. Its function is as follows. No channel activity. This is Transient receptor potential cation channel subfamily M member 3 from Mus musculus (Mouse).